Reading from the N-terminus, the 193-residue chain is Holliday junction branch migration complex subunit RuvA (193 aa).

The tract at residues 1–64 (MIGRIAGTLI…EDAHLLYGFG (64 aa)) is domain I. The domain II stretch occupies residues 65–143 (TASERNTFRE…AELGHVPGTP (79 aa)). The tract at residues 144–151 (AVPDSAVD) is flexible linker. The tract at residues 151–193 (DVLNALLALGYSEKEAAAAIKQVPAGTGVSDGIKLALKALSKA) is domain III.

This sequence belongs to the RuvA family. As to quaternary structure, homotetramer. Forms an RuvA(8)-RuvB(12)-Holliday junction (HJ) complex. HJ DNA is sandwiched between 2 RuvA tetramers; dsDNA enters through RuvA and exits via RuvB. An RuvB hexamer assembles on each DNA strand where it exits the tetramer. Each RuvB hexamer is contacted by two RuvA subunits (via domain III) on 2 adjacent RuvB subunits; this complex drives branch migration. In the full resolvosome a probable DNA-RuvA(4)-RuvB(12)-RuvC(2) complex forms which resolves the HJ.

The protein localises to the cytoplasm. The RuvA-RuvB-RuvC complex processes Holliday junction (HJ) DNA during genetic recombination and DNA repair, while the RuvA-RuvB complex plays an important role in the rescue of blocked DNA replication forks via replication fork reversal (RFR). RuvA specifically binds to HJ cruciform DNA, conferring on it an open structure. The RuvB hexamer acts as an ATP-dependent pump, pulling dsDNA into and through the RuvAB complex. HJ branch migration allows RuvC to scan DNA until it finds its consensus sequence, where it cleaves and resolves the cruciform DNA. The chain is Holliday junction branch migration complex subunit RuvA from Cupriavidus necator (strain ATCC 17699 / DSM 428 / KCTC 22496 / NCIMB 10442 / H16 / Stanier 337) (Ralstonia eutropha).